The sequence spans 150 residues: MVKLALVVAEFNYDITHLMLQKALEHAKFLGAEVTYVVKVPGVFDIPMVLKELALKEDVDAVVTLGAVIQGATKHDEIVAQQAARKILDLAVESGKPITLGIIGHGANRMQALERVEEYARRAVEAAVKLARRKKLLKEAKYGGSTVVID.

5-amino-6-(D-ribitylamino)uracil-binding positions include phenylalanine 11, 43–45, and 67–69; these read VFD and AVI. (2S)-2-hydroxy-3-oxobutyl phosphate is bound at residue 72 to 73; that stretch reads AT. The active-site Proton donor is the histidine 75. A 5-amino-6-(D-ribitylamino)uracil-binding site is contributed by leucine 100. (2S)-2-hydroxy-3-oxobutyl phosphate is bound at residue arginine 115.

The protein belongs to the DMRL synthase family.

It carries out the reaction (2S)-2-hydroxy-3-oxobutyl phosphate + 5-amino-6-(D-ribitylamino)uracil = 6,7-dimethyl-8-(1-D-ribityl)lumazine + phosphate + 2 H2O + H(+). The protein operates within cofactor biosynthesis; riboflavin biosynthesis; riboflavin from 2-hydroxy-3-oxobutyl phosphate and 5-amino-6-(D-ribitylamino)uracil: step 1/2. Catalyzes the formation of 6,7-dimethyl-8-ribityllumazine by condensation of 5-amino-6-(D-ribitylamino)uracil with 3,4-dihydroxy-2-butanone 4-phosphate. This is the penultimate step in the biosynthesis of riboflavin. The protein is 6,7-dimethyl-8-ribityllumazine synthase of Pyrobaculum calidifontis (strain DSM 21063 / JCM 11548 / VA1).